Consider the following 511-residue polypeptide: MAAVGPRTGPGTGAEALALAAELQGEATCSICLELFREPVSVECGHSFCRACIGRCWERPGAGSVGAATRAPPFPLPCPQCREPARPSQLRPNRQLAAVATLLRRFSLPAAAPGEHGSQAAAARAAAARCGQHGEPFKLYCQDDGRAICVVCDRAREHREHAVLPLDEAVQEAKELLESRLRVLKKELEDCEVFRSTEKKESKELLKQMAAEQEKVGAEFQALRAFLVEQEGRLLGRLEELSREVAQKQNENLAQLGVEITQLSKLSSQIQETAQKPDLDFLQEFKSTLSRCSNVPGPKPTTVSSEMKNKVWNVSLKTFVLKGMLKKFKEDLRGELEKEEKVELTLDPDTANPRLILSLDLKGVRLGERAQDLPNHPCRFDTNTRVLASCGFSSGRHHWEVEVGSKDGWAFGVARESVRRKGLTPFTPEEGVWALQLNGGQYWAVTSPERSPLSCGHLSRVRVALDLEVGAVSFYAVEDMRHLYTFRVNFQERVFPLFSVCSTGTYLRIWP.

The RING-type zinc finger occupies 29–82 (CSICLELFREPVSVECGHSFCRACIGRCWERPGAGSVGAATRAPPFPLPCPQCR). S107 carries the phosphoserine; by RPS6KA5 modification. A B box-type zinc finger spans residues 125–166 (AAAARCGQHGEPFKLYCQDDGRAICVVCDRAREHREHAVLPL). Positions 130, 133, 152, and 158 each coordinate Zn(2+). Residues 166-263 (LDEAVQEAKE…AQLGVEITQL (98 aa)) adopt a coiled-coil conformation. The B30.2/SPRY domain occupies 324–511 (MLKKFKEDLR…STGTYLRIWP (188 aa)).

This sequence belongs to the TRIM/RBCC family. Forms homodimers. Interacts with GNIP2. Interacts with GYG1. Interacts with RNF187 (via C-terminus). In terms of processing, phosphorylated at Ser-107 by RPS6KA5/MSK1, which stimulates the ubiquitin ligase activity. Auto-ubiquitinates via 'Lys-63'-linked polyubiquitination. In terms of tissue distribution, skeletal muscle and placenta, at lower levels in heart, brain and pancreas. Isoform 1 is widely expressed with high level in testis, kidney and heart.

It is found in the nucleus. It localises to the cytoplasm. The protein localises to the golgi apparatus. The catalysed reaction is S-ubiquitinyl-[E2 ubiquitin-conjugating enzyme]-L-cysteine + [acceptor protein]-L-lysine = [E2 ubiquitin-conjugating enzyme]-L-cysteine + N(6)-ubiquitinyl-[acceptor protein]-L-lysine.. It participates in protein modification; protein ubiquitination. Its function is as follows. E3 ubiquitin-protein ligase that have both tumor-promoting and tumor-suppressing activities and functions in several biological processes including innate immunity, regulation of ferroptosis as well as cell proliferation and migration. Acts as an antiviral effector against multiple viruses by targeting specific viral proteins for ubiquitination and degradation including norovirus NTPase protein or SARS-CoV-2 NSP5 and NSP8 proteins. Mechanistically, recognizes the C-terminal glutamine-containing motif usually generated by viral proteases that process the polyproteins and trigger their ubiquitination and subsequent degradation. Mediates 'Lys-63'-linked polyubiquitination and stabilization of the JUN coactivator RNF187 in response to growth factor signaling via the MEK/ERK pathway, thereby regulating JUN transactivation and cellular proliferation. Promotes the TLR4-mediated signaling activation through its E3 ligase domain leading to production of pro-inflammatory cytokines and type I interferon. Also plays a negative role in the regulation of exogenous cytosolic DNA virus-triggered immune response. Mechanistically, enhances the 'Lys-48'-linked ubiquitination of STING1 leading to its proteasome-dependent degradation. Mediates the ubiquitination of the SIN3-HDAC chromatin remodeling complex component BRMS1. Modulates NCOA4-mediated ferritinophagy and ferroptosis in glioblastoma cells by ubiquitinating NCOA4, leading to its degradation. Functionally, (Microbial infection) Promotes Zika virus replication by mediating envelope protein E ubiquitination. This Homo sapiens (Human) protein is E3 ubiquitin-protein ligase TRIM7 (TRIM7).